The following is a 332-amino-acid chain: Galectin-4 (332 aa).

Galectin domains lie at 19–150 (YHNP…INFI) and 203–332 (FNGR…YVQI). A beta-D-galactoside is bound at residue 265–271 (WGSEERK). S267 bears the Phosphoserine mark.

In terms of assembly, monomer.

Its function is as follows. Galectin that binds lactose and a related range of sugars. May be involved in the assembly of adherens junctions. The chain is Galectin-4 (LGALS4) from Bos taurus (Bovine).